Here is a 261-residue protein sequence, read N- to C-terminus: 5'-nucleotidase SurE (261 aa).

The a divalent metal cation site is built by Asp-8, Asp-9, Ser-43, and Asn-96.

This sequence belongs to the SurE nucleotidase family. Requires a divalent metal cation as cofactor.

Its subcellular location is the cytoplasm. The enzyme catalyses a ribonucleoside 5'-phosphate + H2O = a ribonucleoside + phosphate. In terms of biological role, nucleotidase that shows phosphatase activity on nucleoside 5'-monophosphates. The chain is 5'-nucleotidase SurE from Cereibacter sphaeroides (strain ATCC 17029 / ATH 2.4.9) (Rhodobacter sphaeroides).